The following is a 208-amino-acid chain: FMN-dependent NADH:quinone oxidoreductase (208 aa).

Residues His10, 17–19, 104–107, 148–153, and Asp184 contribute to the FMN site; these read SRS, MWNL, and SNGGFY.

This sequence belongs to the azoreductase type 1 family. As to quaternary structure, homodimer. The cofactor is FMN.

It catalyses the reaction 2 a quinone + NADH + H(+) = 2 a 1,4-benzosemiquinone + NAD(+). The enzyme catalyses N,N-dimethyl-1,4-phenylenediamine + anthranilate + 2 NAD(+) = 2-(4-dimethylaminophenyl)diazenylbenzoate + 2 NADH + 2 H(+). In terms of biological role, quinone reductase that provides resistance to thiol-specific stress caused by electrophilic quinones. Also exhibits azoreductase activity. Catalyzes the reductive cleavage of the azo bond in aromatic azo compounds to the corresponding amines. Requires NADH, but not NADPH, as an electron donor for its activity. The enzyme can also reduce a wide range of sulfonated azo dyes. The substrate preference order is methyl Red &gt; Orange II &gt; Ponceau BS &gt; Ponceau S &gt; Orange G &gt; Amaranth. The protein is FMN-dependent NADH:quinone oxidoreductase of Enterococcus faecalis (strain ATCC 700802 / V583).